The primary structure comprises 132 residues: Large ribosomal subunit protein uL24 (132 aa).

This sequence belongs to the universal ribosomal protein uL24 family. Part of the 50S ribosomal subunit.

Functionally, one of two assembly initiator proteins, it binds directly to the 5'-end of the 23S rRNA, where it nucleates assembly of the 50S subunit. In terms of biological role, one of the proteins that surrounds the polypeptide exit tunnel on the outside of the subunit. This chain is Large ribosomal subunit protein uL24, found in Aquifex aeolicus (strain VF5).